A 359-amino-acid polypeptide reads, in one-letter code: 3-dehydroquinate synthase (359 aa).

NAD(+) is bound by residues 71 to 76 (DGEQFK), 105 to 109 (GVIGD), 129 to 130 (TT), lysine 142, lysine 151, and 169 to 172 (CLHT). Zn(2+)-binding residues include glutamate 184, histidine 247, and histidine 264.

The protein belongs to the sugar phosphate cyclases superfamily. Dehydroquinate synthase family. It depends on Co(2+) as a cofactor. The cofactor is Zn(2+). NAD(+) is required as a cofactor.

It is found in the cytoplasm. It carries out the reaction 7-phospho-2-dehydro-3-deoxy-D-arabino-heptonate = 3-dehydroquinate + phosphate. It functions in the pathway metabolic intermediate biosynthesis; chorismate biosynthesis; chorismate from D-erythrose 4-phosphate and phosphoenolpyruvate: step 2/7. In terms of biological role, catalyzes the conversion of 3-deoxy-D-arabino-heptulosonate 7-phosphate (DAHP) to dehydroquinate (DHQ). The protein is 3-dehydroquinate synthase of Shewanella putrefaciens (strain CN-32 / ATCC BAA-453).